The primary structure comprises 608 residues: Thiol:disulfide interchange protein DsbD (608 aa).

Residues 1-22 form the signal peptide; sequence MKNLLSLCFLMLAAFTLNPAAA. Cys-135 and Cys-141 are disulfide-bonded. A compositionally biased stretch (polar residues) spans 161–173; that stretch reads SAPSSDAAQQTNE. The tract at residues 161–180 is disordered; it reads SAPSSDAAQQTNEGEVKKSE. The next 8 membrane-spanning stretches (helical) occupy residues 194–214, 241–261, 273–293, 314–334, 352–372, 387–407, 414–434, and 456–476; these read LLTL…PCVF, FFYV…VAMA, IVLI…FGVF, GGSI…ASPC, VVLG…PLLI, WMNI…VFLL, VASQ…FYVA, and SLVI…LIYP. An intrachain disulfide couples Cys-212 to Cys-334. The Thioredoxin domain maps to 469 to 608; sequence LAYQLIYPSS…FSAHVKSIFK (140 aa). Cys-522 and Cys-525 are oxidised to a cystine.

This sequence belongs to the thioredoxin family. DsbD subfamily.

It is found in the cell inner membrane. The enzyme catalyses [protein]-dithiol + NAD(+) = [protein]-disulfide + NADH + H(+). It catalyses the reaction [protein]-dithiol + NADP(+) = [protein]-disulfide + NADPH + H(+). Required to facilitate the formation of correct disulfide bonds in some periplasmic proteins and for the assembly of the periplasmic c-type cytochromes. Acts by transferring electrons from cytoplasmic thioredoxin to the periplasm. This transfer involves a cascade of disulfide bond formation and reduction steps. The polypeptide is Thiol:disulfide interchange protein DsbD (Colwellia psychrerythraea (strain 34H / ATCC BAA-681) (Vibrio psychroerythus)).